The chain runs to 653 residues: Exocyst complex component EXO70C1 (653 aa).

Basic and acidic residues-rich tracts occupy residues 1–34, 159–177, and 438–451; these read MEKS…DELH, SREE…DGSN, and NKPE…QQQR. 3 disordered regions span residues 1–50, 159–190, and 432–456; these read MEKS…HSLV, SREE…DSDR, and EANQ…DDEE.

The protein belongs to the EXO70 family. In terms of assembly, interacts with ROH1A. Binds directly to B1L. Post-translationally, phosphorylated. As to expression, expressed in anthers, pollen and root trichoblast cells.

It localises to the cytoplasm. Required for global plant growth and for male transmission. Involved in the regulation of tip growth of pollen tube. The chain is Exocyst complex component EXO70C1 from Arabidopsis thaliana (Mouse-ear cress).